The primary structure comprises 241 residues: Endothelial protein C receptor (241 aa).

Positions 1 to 17 are cleaved as a signal peptide; it reads MLTTLLPLLPLLLPGWA. The Extracellular segment spans residues 18 to 212; the sequence is LCSQEASDGP…GSQTGRSYTS (195 aa). 4 N-linked (GlcNAc...) asparagine glycosylation sites follow: N49, N66, N138, and N174. 2 cysteine pairs are disulfide-bonded: C120–C188 and C221–C234. Residues 213 to 233 form a helical membrane-spanning segment; it reads LVLGVLVGCFIVTGVAVGIFL. The Cytoplasmic segment spans residues 234–241; sequence CTGGRRRC.

Expressed in endothelial cells.

It localises to the membrane. Functionally, binds activated protein C. Enhances protein C activation by the thrombin-thrombomodulin complex; plays a role in the protein C pathway controlling blood coagulation. The chain is Endothelial protein C receptor (PROCR) from Bos taurus (Bovine).